The primary structure comprises 312 residues: Secreted RxLR effector protein 14 (312 aa).

Positions methionine 1–alanine 20 are cleaved as a signal peptide. Positions arginine 46–arginine 61 match the RxLR-dEER motif.

Belongs to the RxLR effector family.

The protein localises to the secreted. The protein resides in the host nucleus. In terms of biological role, secreted effector that completely suppresses the host cell death induced by cell death-inducing proteins. In Plasmopara viticola (Downy mildew of grapevine), this protein is Secreted RxLR effector protein 14.